Reading from the N-terminus, the 418-residue chain is Thyroid hormone receptor alpha-B (418 aa).

A disordered region spans residues 1–40; sequence MDQNLSGLDCLSEPDEKRWPDGKRKRKNSQCMGKSGMSGD. The interval 1–60 is modulating; it reads MDQNLSGLDCLSEPDEKRWPDGKRKRKNSQCMGKSGMSGDSLVSLPPAGYIPSYLDKDEP. 2 consecutive NR C4-type zinc fingers follow at residues 61-81 and 99-123; these read CVVCSDKATGYHYRCITCEGC and CKYDGCCIIDKITRNQCQLCRFKKC. Positions 61–128 form a DNA-binding region, nuclear receptor; sequence CVVCSDKATG…RFKKCIAVGM (68 aa). The NR LBD domain maps to 171 to 415; sequence EEWELIRIVT…PPLFLEVFED (245 aa).

This sequence belongs to the nuclear hormone receptor family. NR1 subfamily. In terms of assembly, binds to thyroid hormone receptor element (TRE) weakly as homodimers and monomers, but binds TRE with much higher affinity as heterodimers with retinoid X receptors. Can bind DNA as a heterodimer with either rxra or rxrg.

The protein localises to the nucleus. Its function is as follows. High affinity receptor for triiodothyronine (T3). The chain is Thyroid hormone receptor alpha-B (thra-b) from Xenopus laevis (African clawed frog).